The chain runs to 414 residues: Dimethylsulfoniopropionate lyase DddY (414 aa).

A signal peptide spans 1 to 18; it reads MKYMVLFSGLLFSNVLVA.

Belongs to the DMSP lyase DddY family.

The protein localises to the periplasm. It catalyses the reaction S,S-dimethyl-beta-propiothetin = acrylate + dimethyl sulfide + H(+). Catalyzes the cleavage of dimethylsulfoniopropionate (DMSP) into dimethyl sulfide (DMS) and acrylate. The polypeptide is Dimethylsulfoniopropionate lyase DddY (Shewanella woodyi (strain ATCC 51908 / MS32)).